The primary structure comprises 643 residues: Threonine--tRNA ligase (643 aa).

Residues 3–64 enclose the TGS domain; that stretch reads DVVKITFPDG…EEDGAISIIT (62 aa). Positions 245 to 542 are catalytic; that stretch reads DHRKLGKELD…LIEEYKGAFP (298 aa). Zn(2+)-binding residues include C338, H389, and H519.

The protein belongs to the class-II aminoacyl-tRNA synthetase family. Homodimer. Requires Zn(2+) as cofactor.

The protein resides in the cytoplasm. It catalyses the reaction tRNA(Thr) + L-threonine + ATP = L-threonyl-tRNA(Thr) + AMP + diphosphate + H(+). Catalyzes the attachment of threonine to tRNA(Thr) in a two-step reaction: L-threonine is first activated by ATP to form Thr-AMP and then transferred to the acceptor end of tRNA(Thr). Also edits incorrectly charged L-seryl-tRNA(Thr). The sequence is that of Threonine--tRNA ligase from Anoxybacillus flavithermus (strain DSM 21510 / WK1).